A 100-amino-acid polypeptide reads, in one-letter code: U-myrmeciitoxin(01)-Mg7b (100 aa).

Residues methionine 1–alanine 17 form the signal peptide. Positions isoleucine 18–proline 50 are excised as a propeptide. Serine 85 is a glycosylation site (O-linked (GalNAc...) serine). O-linked (GalNAc...) threonine glycans are attached at residues threonine 94 and threonine 95.

It belongs to the formicidae venom precursor-01 superfamily. Glycosylation is critical to maintaining the aqueous solubility of this protein, but does not directly contribute to its activity. In terms of tissue distribution, expressed by the venom gland.

It localises to the secreted. The protein localises to the target cell membrane. Its function is as follows. Neurotoxin that triggers pain behavior and inflammation in mammals, and is paralytic and lethal to insects. Causes a time-dependent increase in cell leak current. May act by targeting membranes. This chain is U-myrmeciitoxin(01)-Mg7b, found in Myrmecia gulosa (Red bulldog ant).